The chain runs to 332 residues: Malate dehydrogenase (332 aa).

NAD(+) is bound by residues 16-17, D43, and G90; that span reads QI. R99 is an oxaloacetate binding site. Positions 113 and 132 each coordinate NAD(+). Oxaloacetate-binding residues include N132, R163, H188, and S243. The active-site Proton acceptor is the H188.

It belongs to the LDH/MDH superfamily. MDH type 2 family. Homodimer.

The protein resides in the cytoplasm. The catalysed reaction is (S)-malate + NAD(+) = oxaloacetate + NADH + H(+). In terms of biological role, catalyzes the reduction of the carbonyl group of oxalacetic acid. No activity with pulegone. The protein is Malate dehydrogenase (MD1) of Nicotiana tabacum (Common tobacco).